A 299-amino-acid chain; its full sequence is Cycloserine biosynthesis protein DcsG (299 aa).

The ATP site is built by lysine 92, lysine 137, serine 144, glutamine 175, proline 176, and valine 178. The region spanning leucine 95 to lysine 298 is the ATP-grasp domain. Catalysis depends on residues arginine 220 and arginine 254. Glutamate 269 and glutamate 271 together coordinate Mg(2+). Glutamate 271 is an active-site residue.

As to quaternary structure, monomer. It depends on Mg(2+) as a cofactor.

It carries out the reaction O-ureido-D-serine + ATP + H2O + H(+) = D-cycloserine + NH4(+) + ADP + phosphate + CO2. Functionally, involved in the biosynthesis of the antibiotic D-cycloserine (DCS), a cyclic structural analog of D-alanine, used as an antitubercular agent. Catalyzes the synthesis of D-cycloserine from O-ureido-D-serine (D-OUS). It reacts with D-OUS, D-homocysteine and beta-aminooxy-D-alanine. The polypeptide is Cycloserine biosynthesis protein DcsG (Streptomyces lavendulae).